The primary structure comprises 739 residues: Putative apoptosis-inducing factor 1, mitochondrial (739 aa).

A mitochondrion-targeting transit peptide spans 1–42 (MSIWGVRCLTQRFIRQAYILANRRLLGPVPQRSPPAYAPLRP). The segment at 257–564 (YLIIGGGTAA…ARRNLYVAGD (308 aa)) is FAD-dependent oxidoreductase. FAD is bound by residues 261-265 (GGGTA), R295, K300, V358, R410, D564, and 580-581 (HH). Residues 644 to 681 (VDQLSESSDSDVPETSTSSSQSSKSDAGASQDGVTCDP) are disordered. The segment covering 656-676 (PETSTSSSQSSKSDAGASQDG) has biased composition (low complexity).

Belongs to the FAD-dependent oxidoreductase family. It depends on FAD as a cofactor.

It localises to the mitochondrion intermembrane space. It catalyses the reaction A + NADH + H(+) = AH2 + NAD(+). Probable NADH oxidoreductase. Mitochondrial effector of cell death that plays roles in developmentally regulated cell death and normal mitochondrial function. This chain is Putative apoptosis-inducing factor 1, mitochondrial (AIF), found in Drosophila melanogaster (Fruit fly).